The sequence spans 199 residues: Large ribosomal subunit protein bL25 (199 aa).

Belongs to the bacterial ribosomal protein bL25 family. CTC subfamily. As to quaternary structure, part of the 50S ribosomal subunit; part of the 5S rRNA/L5/L18/L25 subcomplex. Contacts the 5S rRNA. Binds to the 5S rRNA independently of L5 and L18.

Its function is as follows. This is one of the proteins that binds to the 5S RNA in the ribosome where it forms part of the central protuberance. The polypeptide is Large ribosomal subunit protein bL25 (Pelodictyon phaeoclathratiforme (strain DSM 5477 / BU-1)).